The primary structure comprises 183 residues: Transcription factor 15 (183 aa).

Residues 24 to 46 are disordered; sequence DEENRSESDTSDQSYGCCEGAEA. In terms of domain architecture, bHLH spans 61–113; sequence KQRQAANARERDRTQSVNTAFTALRTLIPTEPVDRKLSKIETLRLASSYIAHL.

As to quaternary structure, heterodimer; efficient DNA binding requires dimerization with another bHLH protein.

It localises to the nucleus. Functionally, early transcription factor that plays a key role in somitogenesis, paraxial mesoderm development and regulation of stem cell pluripotency. Essential for the mesenchymal to epithelial transition associated with somite formation. Required for somite morphogenesis, thereby regulating patterning of the axial skeleton and skeletal muscles. Also plays a key role in regulation of stem cell pluripotency. Promotes pluripotency exit of embryonic stem cells (ESCs) by priming ESCs for differentiation. Acts as a key regulator of self-renewal of hematopoietic stem cells (HSCs) by mediating HSCs quiescence and long-term self-renewal. Acts by forming a heterodimer with another helix-loop-helix (bHLH) protein, that binds DNA on E-box motifs (5'-CANNTG-3') and activates transcription of target genes. In Gallus gallus (Chicken), this protein is Transcription factor 15 (TCF15).